A 259-amino-acid polypeptide reads, in one-letter code: 5'-nucleotidase SurE (259 aa).

The a divalent metal cation site is built by Asp8, Asp9, Ser41, and Asn99.

It belongs to the SurE nucleotidase family. It depends on a divalent metal cation as a cofactor.

It is found in the cytoplasm. The catalysed reaction is a ribonucleoside 5'-phosphate + H2O = a ribonucleoside + phosphate. In terms of biological role, nucleotidase that shows phosphatase activity on nucleoside 5'-monophosphates. This chain is 5'-nucleotidase SurE, found in Synechococcus sp. (strain JA-3-3Ab) (Cyanobacteria bacterium Yellowstone A-Prime).